The primary structure comprises 323 residues: Lipoyl synthase (323 aa).

Residues C65, C70, C76, C91, C95, C98, and S304 each contribute to the [4Fe-4S] cluster site. A Radical SAM core domain is found at F77–T293.

Belongs to the radical SAM superfamily. Lipoyl synthase family. Requires [4Fe-4S] cluster as cofactor.

It is found in the cytoplasm. It catalyses the reaction [[Fe-S] cluster scaffold protein carrying a second [4Fe-4S](2+) cluster] + N(6)-octanoyl-L-lysyl-[protein] + 2 oxidized [2Fe-2S]-[ferredoxin] + 2 S-adenosyl-L-methionine + 4 H(+) = [[Fe-S] cluster scaffold protein] + N(6)-[(R)-dihydrolipoyl]-L-lysyl-[protein] + 4 Fe(3+) + 2 hydrogen sulfide + 2 5'-deoxyadenosine + 2 L-methionine + 2 reduced [2Fe-2S]-[ferredoxin]. Its pathway is protein modification; protein lipoylation via endogenous pathway; protein N(6)-(lipoyl)lysine from octanoyl-[acyl-carrier-protein]: step 2/2. Its function is as follows. Catalyzes the radical-mediated insertion of two sulfur atoms into the C-6 and C-8 positions of the octanoyl moiety bound to the lipoyl domains of lipoate-dependent enzymes, thereby converting the octanoylated domains into lipoylated derivatives. The chain is Lipoyl synthase from Buchnera aphidicola subsp. Acyrthosiphon pisum (strain APS) (Acyrthosiphon pisum symbiotic bacterium).